The sequence spans 554 residues: MRSKKMTHGLEKAPHRSLLHALGLTREELARPLVGVVNAANEVVPGHIHLDDIAEAVKAGVRAAGGTPLEFPAIAVCDGLAMNHEGMRFSLPSRELIADSIEIMATAHPFDALVFIPNCDKSVPGMLMAMLRLDVPSVMVSGGPMLAGATLAGRADLITVFEGVGRVQRGDMTEAELDELVEGACPGCGSCAGMFTANSMNCLAETIGLALPGNGTTPAVTAARIRLAKHAGMKVMEMLERNIRPRDIVTEKAVANAVAVDMALGCSTNTVLHLPAVFAEAGLDLTLDIFDKVSRKTPNLCKLSPAGHHHIQDLHAAGGIPAVMAELDSIGLIDRSAMTVTGRTVGENLDALGAKVRDADVIRSVDAPYSPQGGIAILKGSLAPGGAVVKQSAVAPEMMVREAVARVFDSEEAACEAIMGGRIKAGDAIVIRYEGPKGGPGMREMLTPTSAIAGMGLGADVALITDGRFSGGTRGAAIGHVSPEAAEGGPIGLVQEGDRIRIDIPARALDLLVDEDELARRRAVFVPVEKEITSPLLRRYARMVSSAATGARQR.

Asp78 lines the Mg(2+) pocket. Position 119 (Cys119) interacts with [2Fe-2S] cluster. Residues Asp120 and Lys121 each contribute to the Mg(2+) site. The residue at position 121 (Lys121) is an N6-carboxylysine. Residue Cys191 participates in [2Fe-2S] cluster binding. Glu444 lines the Mg(2+) pocket. Ser470 functions as the Proton acceptor in the catalytic mechanism.

The protein belongs to the IlvD/Edd family. In terms of assembly, homodimer. It depends on [2Fe-2S] cluster as a cofactor. Mg(2+) serves as cofactor.

It carries out the reaction (2R)-2,3-dihydroxy-3-methylbutanoate = 3-methyl-2-oxobutanoate + H2O. The catalysed reaction is (2R,3R)-2,3-dihydroxy-3-methylpentanoate = (S)-3-methyl-2-oxopentanoate + H2O. It participates in amino-acid biosynthesis; L-isoleucine biosynthesis; L-isoleucine from 2-oxobutanoate: step 3/4. The protein operates within amino-acid biosynthesis; L-valine biosynthesis; L-valine from pyruvate: step 3/4. Functions in the biosynthesis of branched-chain amino acids. Catalyzes the dehydration of (2R,3R)-2,3-dihydroxy-3-methylpentanoate (2,3-dihydroxy-3-methylvalerate) into 2-oxo-3-methylpentanoate (2-oxo-3-methylvalerate) and of (2R)-2,3-dihydroxy-3-methylbutanoate (2,3-dihydroxyisovalerate) into 2-oxo-3-methylbutanoate (2-oxoisovalerate), the penultimate precursor to L-isoleucine and L-valine, respectively. The chain is Dihydroxy-acid dehydratase from Nitratidesulfovibrio vulgaris (strain DP4) (Desulfovibrio vulgaris).